Here is a 399-residue protein sequence, read N- to C-terminus: Argininosuccinate synthase (399 aa).

ATP-binding positions include A10–S18 and A38. Residue Y89 participates in L-citrulline binding. ATP is bound at residue G119. 3 residues coordinate L-aspartate: T121, N125, and D126. N125 contributes to the L-citrulline binding site. L-citrulline contacts are provided by R129, S177, S186, E262, and Y274.

Belongs to the argininosuccinate synthase family. Type 1 subfamily. Homotetramer.

The protein resides in the cytoplasm. The enzyme catalyses L-citrulline + L-aspartate + ATP = 2-(N(omega)-L-arginino)succinate + AMP + diphosphate + H(+). Its pathway is amino-acid biosynthesis; L-arginine biosynthesis; L-arginine from L-ornithine and carbamoyl phosphate: step 2/3. This chain is Argininosuccinate synthase, found in Rippkaea orientalis (strain PCC 8801 / RF-1) (Cyanothece sp. (strain PCC 8801)).